The following is a 256-amino-acid chain: Beta-fibrinogenase-like (256 aa).

Residues 1–18 form the signal peptide; the sequence is MVLIKVLANLLVLQLSYA. A propeptide spanning residues 19-24 is cleaved from the precursor; the sequence is QKSSEL. One can recognise a Peptidase S1 domain in the interval 25-247; that stretch reads VVGGDECNIN…YTDWIQSIIA (223 aa). Cystine bridges form between Cys31-Cys161, Cys49-Cys65, Cys96-Cys254, Cys140-Cys208, Cys172-Cys187, and Cys198-Cys223. Asn44 carries an N-linked (GlcNAc...) asparagine glycan. The active-site Charge relay system is His64. N-linked (GlcNAc...) asparagine glycans are attached at residues Asn78 and Asn101. Asp108 functions as the Charge relay system in the catalytic mechanism. Asn152 carries an N-linked (GlcNAc...) asparagine glycan. The active-site Charge relay system is the Ser202.

Belongs to the peptidase S1 family. Snake venom subfamily. As to quaternary structure, monomer. Expressed by the venom gland.

The protein localises to the secreted. Snake venom serine protease that has fibrinogenolytic activities by hydrolyzing the beta chain of fibrinogen (FGB). Typical arginine esterase which hydrolyzes esters and amides of arginine. In Daboia siamensis (Eastern Russel's viper), this protein is Beta-fibrinogenase-like.